Consider the following 218-residue polypeptide: tRNA (guanine-N(7)-)-methyltransferase (218 aa).

The disordered stretch occupies residues 1–26; sequence MRLKNKPWANELVEEHPESALDRPDP. The span at 13–26 shows a compositional bias: basic and acidic residues; it reads VEEHPESALDRPDP. S-adenosyl-L-methionine contacts are provided by Glu45, Glu70, Asp97, and Asp119. Asp119 is an active-site residue. A substrate-binding site is contributed by Lys123. Residues 125-130 form an interaction with RNA region; it reads RHEKRR. Substrate-binding positions include Asp155 and 195–198; that span reads TEYE.

Belongs to the class I-like SAM-binding methyltransferase superfamily. TrmB family.

The enzyme catalyses guanosine(46) in tRNA + S-adenosyl-L-methionine = N(7)-methylguanosine(46) in tRNA + S-adenosyl-L-homocysteine. The protein operates within tRNA modification; N(7)-methylguanine-tRNA biosynthesis. Catalyzes the formation of N(7)-methylguanine at position 46 (m7G46) in tRNA. This is tRNA (guanine-N(7)-)-methyltransferase from Lactobacillus delbrueckii subsp. bulgaricus (strain ATCC 11842 / DSM 20081 / BCRC 10696 / JCM 1002 / NBRC 13953 / NCIMB 11778 / NCTC 12712 / WDCM 00102 / Lb 14).